The chain runs to 119 residues: Beta-2-microglobulin (119 aa).

A signal peptide spans 1 to 20 (MARSVAVVFLMLLSVVCLDA). Residues 25 to 114 (PQVQVYTRHP…TTLKEPKVVT (90 aa)) enclose the Ig-like C1-type domain. The cysteines at positions 45 and 100 are disulfide-linked.

This sequence belongs to the beta-2-microglobulin family. In terms of assembly, heterodimer of an alpha chain and a beta chain. Beta-2-microglobulin is the beta-chain of major histocompatibility complex class I molecules.

The protein resides in the secreted. Functionally, component of the class I major histocompatibility complex (MHC). Involved in the presentation of peptide antigens to the immune system. The chain is Beta-2-microglobulin (B2M) from Cricetulus griseus (Chinese hamster).